The following is an 81-amino-acid chain: Exodeoxyribonuclease 7 small subunit (81 aa).

This sequence belongs to the XseB family. Heterooligomer composed of large and small subunits.

Its subcellular location is the cytoplasm. It carries out the reaction Exonucleolytic cleavage in either 5'- to 3'- or 3'- to 5'-direction to yield nucleoside 5'-phosphates.. Functionally, bidirectionally degrades single-stranded DNA into large acid-insoluble oligonucleotides, which are then degraded further into small acid-soluble oligonucleotides. This Pasteurella multocida (strain Pm70) protein is Exodeoxyribonuclease 7 small subunit.